A 118-amino-acid polypeptide reads, in one-letter code: Small ribosomal subunit protein uS13 (118 aa).

A disordered region spans residues 94-118 (GLPVRGQRTKTNARTRKGPRKPIKK).

This sequence belongs to the universal ribosomal protein uS13 family. As to quaternary structure, part of the 30S ribosomal subunit. Forms a loose heterodimer with protein S19. Forms two bridges to the 50S subunit in the 70S ribosome.

Functionally, located at the top of the head of the 30S subunit, it contacts several helices of the 16S rRNA. In the 70S ribosome it contacts the 23S rRNA (bridge B1a) and protein L5 of the 50S subunit (bridge B1b), connecting the 2 subunits; these bridges are implicated in subunit movement. Contacts the tRNAs in the A and P-sites. In Mannheimia succiniciproducens (strain KCTC 0769BP / MBEL55E), this protein is Small ribosomal subunit protein uS13.